The following is a 318-amino-acid chain: Peroxisomal targeting signal 2 receptor (318 aa).

WD repeat units follow at residues 60–91 (DWNDGLFDVTWSENNEHVLVTCSGDGSLQLWD), 104–136 (EHTQEVYSVDWSQTRGEQLVVSGSWDQTVKVWD), 148–179 (GHESVIYSTIWSPHIPGCFASASGDQTLRIWD), 191–222 (AHQTEILSCDWCKYNENLVVTGAVDCSLRGWD), 235–266 (GHTYAIRRVKFSPFHASVLASCSYDFTVRFWN), and 279–310 (HHTEFTCGLDLSLQSPTQVADCSWDETIKIYD).

Belongs to the WD repeat peroxin-7 family. Interacts with PEX5; interaction only takes place when PEX7 is associated with cargo proteins. Interacts with VWA8.

It localises to the cytoplasm. It is found in the cytosol. Its subcellular location is the peroxisome matrix. In terms of biological role, receptor required for the peroxisomal import of proteins containing a C-terminal PTS2-type peroxisomal targeting signal. Specifically binds to cargo proteins containing a PTS2 peroxisomal targeting signal in the cytosol. Cargo protein-binding triggers interaction with PEX5 and formation of a ternary complex composed of PEX5 and PEX7 along with PTS2-containing cargo proteins, which is tranlocated into peroxisomes by passing through the PEX13-PEX14 docking complex. This chain is Peroxisomal targeting signal 2 receptor, found in Mus musculus (Mouse).